The following is a 370-amino-acid chain: Holliday junction branch migration complex subunit RuvB (370 aa).

The tract at residues 1–53 is disordered; that stretch reads MAILSSQKQPLEPEPSKNPQSVQQPGLPPSTPEQGLLTAEVSPEERLSRTDDI. Residues 13-214 form a large ATPase domain (RuvB-L) region; the sequence is PEPSKNPQSV…FGLIQRLRFY (202 aa). The segment covering 43 to 53 has biased composition (basic and acidic residues); that stretch reads PEERLSRTDDI. Residues Ile-53, Arg-54, Gly-95, Lys-98, Thr-99, Thr-100, 161–163, Arg-204, Tyr-214, and Arg-251 contribute to the ATP site; that span reads EDF. Thr-99 lines the Mg(2+) pocket. Positions 215-285 are small ATPAse domain (RuvB-S); that stretch reads EPEELSQIIL…IASEALQLFN (71 aa). The head domain (RuvB-H) stretch occupies residues 288–370; it reads PCGLDWTDRR…TPPDGQLSLL (83 aa). Arg-343 and Arg-348 together coordinate DNA.

This sequence belongs to the RuvB family. In terms of assembly, homohexamer. Forms an RuvA(8)-RuvB(12)-Holliday junction (HJ) complex. HJ DNA is sandwiched between 2 RuvA tetramers; dsDNA enters through RuvA and exits via RuvB. An RuvB hexamer assembles on each DNA strand where it exits the tetramer. Each RuvB hexamer is contacted by two RuvA subunits (via domain III) on 2 adjacent RuvB subunits; this complex drives branch migration. In the full resolvosome a probable DNA-RuvA(4)-RuvB(12)-RuvC(2) complex forms which resolves the HJ.

Its subcellular location is the cytoplasm. The catalysed reaction is ATP + H2O = ADP + phosphate + H(+). Functionally, the RuvA-RuvB-RuvC complex processes Holliday junction (HJ) DNA during genetic recombination and DNA repair, while the RuvA-RuvB complex plays an important role in the rescue of blocked DNA replication forks via replication fork reversal (RFR). RuvA specifically binds to HJ cruciform DNA, conferring on it an open structure. The RuvB hexamer acts as an ATP-dependent pump, pulling dsDNA into and through the RuvAB complex. RuvB forms 2 homohexamers on either side of HJ DNA bound by 1 or 2 RuvA tetramers; 4 subunits per hexamer contact DNA at a time. Coordinated motions by a converter formed by DNA-disengaged RuvB subunits stimulates ATP hydrolysis and nucleotide exchange. Immobilization of the converter enables RuvB to convert the ATP-contained energy into a lever motion, pulling 2 nucleotides of DNA out of the RuvA tetramer per ATP hydrolyzed, thus driving DNA branch migration. The RuvB motors rotate together with the DNA substrate, which together with the progressing nucleotide cycle form the mechanistic basis for DNA recombination by continuous HJ branch migration. Branch migration allows RuvC to scan DNA until it finds its consensus sequence, where it cleaves and resolves cruciform DNA. The sequence is that of Holliday junction branch migration complex subunit RuvB from Cyanothece sp. (strain PCC 7425 / ATCC 29141).